Consider the following 106-residue polypeptide: Glycine/glutamate-rich protein sgp1 (106 aa).

The first 20 residues, 1 to 20 (MKYSLIFILTLACLIASSLA), serve as a signal peptide directing secretion. The disordered stretch occupies residues 20-66 (ARPEGEEKPADDAAGDKKEEGAEGDKTAAGGDEGFTGGDGKNAGGAG). The span at 22-45 (PEGEEKPADDAAGDKKEEGAEGDK) shows a compositional bias: basic and acidic residues. The span at 50–66 (GDEGFTGGDGKNAGGAG) shows a compositional bias: gly residues.

It localises to the secreted. The sequence is that of Glycine/glutamate-rich protein sgp1 (sgp1) from Glossina morsitans morsitans (Savannah tsetse fly).